A 466-amino-acid chain; its full sequence is Probable periplasmic serine protease do/HhoA-like (466 aa).

A signal peptide spans Met-1 to Ala-29. Residues His-120, Asp-150, and Ser-226 each act as charge relay system in the active site. PDZ domains lie at Ile-270–Gly-361 and Lys-367–Asp-458.

Belongs to the peptidase S1C family.

It localises to the periplasm. The polypeptide is Probable periplasmic serine protease do/HhoA-like (Haemophilus influenzae (strain ATCC 51907 / DSM 11121 / KW20 / Rd)).